The sequence spans 267 residues: Very long chain fatty acid elongase 6 (267 aa).

The N-linked (GlcNAc...) asparagine glycan is linked to Asn-2. A run of 7 helical transmembrane segments spans residues 34–51 (FLFSALYAAFIFGGRHLM), 70–90 (LAVFSIFGALRTGAYMLYILM), 111–131 (FWAYAFVLSKAPELGDTIFII), 136–156 (KLIFLHWYHHITVLLYSWYSY), 159–179 (MVAGGGWFMTMNYGVHAVMYS), 197–217 (FITLSQITQMLMGCVINYLVF), and 234–254 (IFWSSLMYLSYLLLFCHFFFE).

The protein belongs to the ELO family. ELOVL6 subfamily. Post-translationally, N-Glycosylated. As to expression, expressed in liver and barely in brain.

The protein localises to the endoplasmic reticulum membrane. It catalyses the reaction a very-long-chain acyl-CoA + malonyl-CoA + H(+) = a very-long-chain 3-oxoacyl-CoA + CO2 + CoA. It carries out the reaction hexadecanoyl-CoA + malonyl-CoA + H(+) = 3-oxooctadecanoyl-CoA + CO2 + CoA. The enzyme catalyses (9Z)-hexadecenoyl-CoA + malonyl-CoA + H(+) = 3-oxo-(11Z)-octadecenoyl-CoA + CO2 + CoA. The catalysed reaction is dodecanoyl-CoA + malonyl-CoA + H(+) = 3-oxotetradecanoyl-CoA + CO2 + CoA. It catalyses the reaction tetradecanoyl-CoA + malonyl-CoA + H(+) = 3-oxohexadecanoyl-CoA + CO2 + CoA. It carries out the reaction (9Z)-octadecenoyl-CoA + malonyl-CoA + H(+) = 3-oxo-(11Z)-eicosenoyl-CoA + CO2 + CoA. The enzyme catalyses (9Z,12Z)-octadecadienoyl-CoA + malonyl-CoA + H(+) = (11Z,14Z)-3-oxoicosa-11,14-dienoyl-CoA + CO2 + CoA. The catalysed reaction is (9Z,12Z,15Z)-octadecatrienoyl-CoA + malonyl-CoA + H(+) = (11Z,14Z,17Z)-3-oxoeicosatrienoyl-CoA + CO2 + CoA. It functions in the pathway lipid metabolism; fatty acid biosynthesis. Its activity is regulated as follows. The reaction is stimulated by the presence of HSD17B12, the enzyme catalyzing the second step of the elongation cycle. In terms of biological role, catalyzes the first and rate-limiting reaction of the four reactions that constitute the long-chain fatty acids elongation cycle. This endoplasmic reticulum-bound enzymatic process allows the addition of 2 carbons to the chain of long- and very long-chain fatty acids (VLCFAs) per cycle. Condensing enzyme that elongates fatty acids with 12, 14 and 16 carbons with higher activity toward C16:0 acyl-CoAs. Catalyzes the synthesis of unsaturated C16 long chain fatty acids and, to a lesser extent, C18:0 and those with low desaturation degree. May participate in the production of saturated and monounsaturated VLCFAs of different chain lengths that are involved in multiple biological processes as precursors of membrane lipids and lipid mediators. The chain is Very long chain fatty acid elongase 6 from Rattus norvegicus (Rat).